The sequence spans 210 residues: BAG family molecular chaperone regulator 1 (210 aa).

A Ubiquitin-like domain is found at 8–85 (SSVQTTIDIL…IIVMGGKNAL (78 aa)). The BAG domain occupies 108–194 (AYDLNLRDVA…TLLNQNDALL (87 aa)).

Homodimer or homotetramer.

In terms of biological role, may inhibit the chaperone activity of HSP70/HSC70 by promoting substrate release in an ATP-dependent manner. The protein is BAG family molecular chaperone regulator 1 (bag-1) of Caenorhabditis elegans.